Reading from the N-terminus, the 513-residue chain is 2,3-bisphosphoglycerate-independent phosphoglycerate mutase (513 aa).

Residues aspartate 15 and serine 65 each contribute to the Mn(2+) site. The Phosphoserine intermediate role is filled by serine 65. Substrate-binding positions include histidine 126, 156-157 (RD), arginine 188, arginine 194, 263-266 (RADR), and lysine 337. The Mn(2+) site is built by aspartate 402, histidine 406, aspartate 443, histidine 444, and histidine 461.

Belongs to the BPG-independent phosphoglycerate mutase family. Monomer. Mn(2+) is required as a cofactor.

It carries out the reaction (2R)-2-phosphoglycerate = (2R)-3-phosphoglycerate. It functions in the pathway carbohydrate degradation; glycolysis; pyruvate from D-glyceraldehyde 3-phosphate: step 3/5. Functionally, catalyzes the interconversion of 2-phosphoglycerate and 3-phosphoglycerate. In Moorella thermoacetica (strain ATCC 39073 / JCM 9320), this protein is 2,3-bisphosphoglycerate-independent phosphoglycerate mutase.